Here is a 79-residue protein sequence, read N- to C-terminus: Serine rich endogenous peptide 2 (79 aa).

The signal sequence occupies residues 1-19 (MANNLGLVILLLVIVLVSC). Residues 25 to 79 (CALASPQKSRPSSEWRRKLIPVRSSRSPRSPSFAPKKPPPPPPSPPLSPSSPPSN) are disordered. The SCOOP motif signature appears at 45–57 (PVRSSRSPRSPSF). A compositionally biased stretch (low complexity) spans 45 to 59 (PVRSSRSPRSPSFAP). Positions 49-51 (SRS) match the SxS motif essential for MIK2 binding motif. Positions 60–79 (KKPPPPPPSPPLSPSSPPSN) are enriched in pro residues.

This sequence belongs to the serine rich endogenous peptide (SCOOP) phytocytokine family. In terms of assembly, interacts with MIK2 (via extracellular leucine-rich repeat domain); this interaction triggers the formation of complex between MIK2 and the BAK1/SERK3 and SERK4 coreceptors, and subsequent BAK1 activation by phosphorylation.

It is found in the cell membrane. It localises to the secreted. Its subcellular location is the extracellular space. The protein resides in the apoplast. In terms of biological role, brassicaceae-specific phytocytokine (plant endogenous peptide released into the apoplast) perceived by MIK2 in a BAK1/SERK3 and SERK4 coreceptors-dependent manner, that modulates various physiological and antimicrobial processes including growth prevention and reactive oxygen species (ROS) response regulation. This Arabidopsis thaliana (Mouse-ear cress) protein is Serine rich endogenous peptide 2.